The primary structure comprises 269 residues: UPF0494 membrane protein C1348.01 (269 aa).

The next 4 helical transmembrane spans lie at 107 to 127 (WPLL…KFEV), 144 to 164 (IWVP…SLIF), 177 to 197 (GVII…IAAL), and 201 to 221 (ITGL…LSLG).

This sequence belongs to the UPF0494 family.

Its subcellular location is the vacuole membrane. This Schizosaccharomyces pombe (strain 972 / ATCC 24843) (Fission yeast) protein is UPF0494 membrane protein C1348.01.